The sequence spans 889 residues: 97 kDa heat shock protein (889 aa).

2 disordered regions span residues 504-622 (EDAM…ATTD) and 812-889 (FVCD…MELD). Residues 549–585 (SADKEEQADNGSKETSKDSKDQTSESSKSDKESKDQN) show a composition bias toward basic and acidic residues. Over residues 586–597 (SEGSKSDNSSTE) the composition is skewed to polar residues. A compositionally biased stretch (basic and acidic residues) spans 869-889 (ASKEGETKPDETKPDVEMELD).

Belongs to the heat shock protein 70 family.

Cell surface recognition protein that binds acrosome-reacted sperm and thereby mediates binding and subsequent fusion of the sperm and egg. This is 97 kDa heat shock protein from Strongylocentrotus purpuratus (Purple sea urchin).